Reading from the N-terminus, the 200-residue chain is Holliday junction branch migration complex subunit RuvA (200 aa).

The segment at 1–64 (MIGHLRGIIV…EDAHTLYGFH (64 aa)) is domain I. The segment at 65–143 (NDHERRLFRA…RWHTNDTPSP (79 aa)) is domain II. A flexible linker region spans residues 144–148 (EGLRS). The interval 149–200 (SNTQPTQDAISALMALGYKPQEAKRAIDAIQKPDLSAETLIRLALKQMVLGT) is domain III.

It belongs to the RuvA family. Homotetramer. Forms an RuvA(8)-RuvB(12)-Holliday junction (HJ) complex. HJ DNA is sandwiched between 2 RuvA tetramers; dsDNA enters through RuvA and exits via RuvB. An RuvB hexamer assembles on each DNA strand where it exits the tetramer. Each RuvB hexamer is contacted by two RuvA subunits (via domain III) on 2 adjacent RuvB subunits; this complex drives branch migration. In the full resolvosome a probable DNA-RuvA(4)-RuvB(12)-RuvC(2) complex forms which resolves the HJ.

The protein resides in the cytoplasm. Functionally, the RuvA-RuvB-RuvC complex processes Holliday junction (HJ) DNA during genetic recombination and DNA repair, while the RuvA-RuvB complex plays an important role in the rescue of blocked DNA replication forks via replication fork reversal (RFR). RuvA specifically binds to HJ cruciform DNA, conferring on it an open structure. The RuvB hexamer acts as an ATP-dependent pump, pulling dsDNA into and through the RuvAB complex. HJ branch migration allows RuvC to scan DNA until it finds its consensus sequence, where it cleaves and resolves the cruciform DNA. The sequence is that of Holliday junction branch migration complex subunit RuvA from Coxiella burnetii (strain CbuG_Q212) (Coxiella burnetii (strain Q212)).